A 253-amino-acid polypeptide reads, in one-letter code: DNA repair protein RecO (253 aa).

The protein belongs to the RecO family.

In terms of biological role, involved in DNA repair and RecF pathway recombination. In Dehalococcoides mccartyi (strain ATCC BAA-2266 / KCTC 15142 / 195) (Dehalococcoides ethenogenes (strain 195)), this protein is DNA repair protein RecO.